The sequence spans 395 residues: MAEEPTYTTEQVDELIHAGLGTVDFFLSRPIDAQSSLGKGSIPPGVTAVLTSAAETKSKPVAAGPVKPRRKKVISNTTPYTIADNIPPEKLPINTPIPNPLLPLARPHGKMTDIDIVTGNITEGSYKGVELAKLGKQTLLTRFTSNEPVSSAGSAQDPNFKRGGELIEKEQEATIGENGVLHGSEIRSKSSSGVIPGVPQSRPQLASSPAHADPAPASAENVKEIIELLKGLDLRLQTVEGKVDKILATSATIINLKNEMTSLKASVATMEGMITTIKIMDPSTPTNVPVEEIRKSLHNVPVVIAGPTSGGFTAEQVILISMDELARPTLSSTKRITRKPESKKDLTGIKLTLMQLANDCISRPDTKTEFVTKIQAATTESQLNEIKRSIIRSAI.

A disordered region spans residues 178–217; that stretch reads NGVLHGSEIRSKSSSGVIPGVPQSRPQLASSPAHADPAPA. Low complexity predominate over residues 206-217; sequence ASSPAHADPAPA. Residues 220–283 form a multimerization region; the sequence is ENVKEIIELL…ITTIKIMDPS (64 aa).

It belongs to the rubulavirus/avulavirus P protein family. As to quaternary structure, homotetramer. Interacts (via multimerization domain) with polymerase L; this interaction forms the polymerase L-P complex. Interacts (via N-terminus) with N0 (via Ncore); this interaction allows P to chaperon N0 to avoid N polymerization before encapsidation. Interacts (via C-terminus) with N-RNA template; this interaction positions the polymerase on the template for both transcription and replication. Interacts with host ARHGAP26; this interaction promotes host RHOA activation. Interacts with host KPNA1 and KPNA6.

Its subcellular location is the host cytoplasm. Essential cofactor of the RNA polymerase L that plays a central role in the transcription and replication by forming the polymerase complex with RNA polymerase L and recruiting L to the genomic N-RNA template for RNA synthesis. Also plays a central role in the encapsidation of nascent RNA chains by forming the encapsidation complex with the nucleocapsid protein N (N-P complex). Acts as a chaperone for newly synthesized free N protein, so-called N0, allowing encapsidation of nascent RNA chains during replication. The nucleoprotein protein N prevents excessive phosphorylation of P, which leads to down-regulation of viral transcription/ replication. Participates, together with N, in the formation of viral factories (viroplasms), which are large inclusions in the host cytoplasm where replication takes place. Also plays a role in viral growth by promoting host RHOA activation and thus actin formation via ARHGAP26 inhibition. The protein is Phosphoprotein (P/V) of Homo sapiens (Human).